Reading from the N-terminus, the 225-residue chain is MQIKWFGHAAFMVEVGGARLLIDPWISNPLSPATPQDVINARPTHIMITHDHFDHMGEAVDIAKATKAPIVGTFELTLEVAEKGIPEAQTMPMNIGGTIKLGDGIELYMTPALHTANRGAPSGFVIATPEGTVYHAGDTALFRDMELIGELYDIDVALLPIGSVFTMGPREAAIATQLLRARRVVPMHYNTFPLIKQDPEDFKARVEAVSRAKVFVMKPGDVLKV.

The protein belongs to the UPF0173 family.

In Pyrobaculum aerophilum (strain ATCC 51768 / DSM 7523 / JCM 9630 / CIP 104966 / NBRC 100827 / IM2), this protein is UPF0173 metal-dependent hydrolase PAE2160.